Reading from the N-terminus, the 314-residue chain is Epithelial cell adhesion molecule (314 aa).

The N-terminal stretch at 1-23 (MAPPQVLAFGLLLAAATAAVAAA) is a signal peptide. Over 24–265 (QQGCVCENYK…PPEFSMQGLQ (242 aa)) the chain is Extracellular. 6 disulfides stabilise this stretch: C27–C46, C29–C59, C38–C48, C66–C99, C110–C116, and C118–C135. N37 is a glycosylation site (N-linked (GlcNAc...) asparagine). Residues 63-135 (ASKCLVMKAE…RTDKDSEISC (73 aa)) form the Thyroglobulin type-1 domain. N111 carries an N-linked (GlcNAc...) asparagine glycan. N-linked (GlcNAc...) asparagine glycosylation is present at N198. A helical transmembrane segment spans residues 266-288 (AGIIAVIAVVAIAIVAGIIVLIV). Residues 289–314 (STKKRRAKYEKAEIKEMGEMHRELNA) lie on the Cytoplasmic side of the membrane.

This sequence belongs to the EPCAM family. As to quaternary structure, monomer. Interacts with phosphorylated CLDN7. Post-translationally, glycosylation at Asn-198 is crucial for protein stability.

The protein localises to the lateral cell membrane. It localises to the cell junction. It is found in the tight junction. Functionally, may act as a physical homophilic interaction molecule between intestinal epithelial cells (IECs) and intraepithelial lymphocytes (IELs) at the mucosal epithelium for providing immunological barrier as a first line of defense against mucosal infection. Plays a role in embryonic stem cells proliferation and differentiation. Up-regulates the expression of FABP5, MYC and cyclins A and E. This is Epithelial cell adhesion molecule (TACSTD1) from Sus scrofa (Pig).